The chain runs to 83 residues: UPF0248 protein PH1212.1 (83 aa).

Belongs to the UPF0248 family.

The protein is UPF0248 protein PH1212.1 of Pyrococcus horikoshii (strain ATCC 700860 / DSM 12428 / JCM 9974 / NBRC 100139 / OT-3).